A 782-amino-acid chain; its full sequence is ATP-dependent 6-phosphofructokinase, muscle type (782 aa).

N-acetylthreonine is present on Thr2. The segment at 2–390 (THEEHHAAKT…NWEVYKLLAH (389 aa)) is N-terminal catalytic PFK domain 1. ATP is bound by residues Gly25, 88–89 (RC), and 118–121 (GDGS). Asp119 provides a ligand contact to Mg(2+). Ser133 is subject to Phosphoserine. Substrate-binding positions include 164–166 (SID), Arg201, 208–210 (MGR), Glu264, Arg292, and 298–301 (HVQR). Asp166 (proton acceptor) is an active-site residue. Ser377 bears the Phosphoserine mark. The segment at 391–403 (IRPPVSKTSATMH) is interdomain linker. The interval 404–782 (TVAVMNVGAP…SRKRSGETSI (379 aa)) is C-terminal regulatory PFK domain 2. Residues Arg473 and 530 to 534 (TVSNN) contribute to the beta-D-fructose 2,6-bisphosphate site. The O-linked (GlcNAc) serine glycan is linked to Ser532. Residue Lys559 is modified to N6-(2-hydroxyisobutyryl)lysine. Residues Arg568, 575 to 577 (MGG), Glu631, Arg657, and 663 to 666 (HMQQ) contribute to the beta-D-fructose 2,6-bisphosphate site. Ser669 carries the post-translational modification Phosphoserine. Arg737 is a beta-D-fructose 2,6-bisphosphate binding site. The residue at position 777 (Ser777) is a Phosphoserine.

This sequence belongs to the phosphofructokinase type A (PFKA) family. ATP-dependent PFK group I subfamily. Eukaryotic two domain clade 'E' sub-subfamily. As to quaternary structure, homo- and heterotetramers. Phosphofructokinase (PFK) enzyme functions as a tetramer composed of different combinations of 3 types of subunits, called PFKM (M), PFKL (L) and PFKP (P). The composition of the PFK tetramer differs according to the tissue type it is present in. The kinetic and regulatory properties of the tetrameric enzyme are dependent on the subunit composition, hence can vary across tissues. Interacts (via C-terminus) with HK1 (via N-terminal spermatogenic cell-specific region). Requires Mg(2+) as cofactor. In terms of processing, glcNAcylation decreases enzyme activity.

Its subcellular location is the cytoplasm. It carries out the reaction beta-D-fructose 6-phosphate + ATP = beta-D-fructose 1,6-bisphosphate + ADP + H(+). It functions in the pathway carbohydrate degradation; glycolysis; D-glyceraldehyde 3-phosphate and glycerone phosphate from D-glucose: step 3/4. Its activity is regulated as follows. Allosterically activated by ADP, AMP, or fructose 2,6-bisphosphate, and allosterically inhibited by ATP or citrate. Its function is as follows. Catalyzes the phosphorylation of D-fructose 6-phosphate to fructose 1,6-bisphosphate by ATP, the first committing step of glycolysis. The protein is ATP-dependent 6-phosphofructokinase, muscle type (PFKM) of Canis lupus familiaris (Dog).